Consider the following 344-residue polypeptide: Rho guanine nucleotide exchange factor 39 (344 aa).

A DH domain is found at 22–197 (KRVCTARELL…SETAQKVHAI (176 aa)). The PH domain occupies 227-331 (WFLRQGWLLV…WHHSLTLAIR (105 aa)).

The protein resides in the cell membrane. Functionally, promotes cell proliferation. The polypeptide is Rho guanine nucleotide exchange factor 39 (Arhgef39) (Mus musculus (Mouse)).